The primary structure comprises 219 residues: MKMNLAEVEIRILGCLIEKELTTPENYPLSLNTLTNACNQKSNRAPLMDLAEADVVRGLDKLGARGLARLTTTGGRVAKYRHSLDDSLHLAPPALAVLAELMLRGPQTAGELRNRAERMTPLADIASVEEILGALMEFGPPLVTRLPRQPGRKEQRYAQLFAGEPDLPDDTPAPPPEPARQRVMAENERLARLDGEVSALRAEIASLRSTIEELRVLFE.

The disordered stretch occupies residues Ala162–Gln181.

Belongs to the UPF0502 family.

This chain is UPF0502 protein Gura_3445, found in Geotalea uraniireducens (strain Rf4) (Geobacter uraniireducens).